The primary structure comprises 112 residues: Large ribosomal subunit protein uL22 (112 aa).

It belongs to the universal ribosomal protein uL22 family. As to quaternary structure, part of the 50S ribosomal subunit.

Functionally, this protein binds specifically to 23S rRNA; its binding is stimulated by other ribosomal proteins, e.g. L4, L17, and L20. It is important during the early stages of 50S assembly. It makes multiple contacts with different domains of the 23S rRNA in the assembled 50S subunit and ribosome. Its function is as follows. The globular domain of the protein is located near the polypeptide exit tunnel on the outside of the subunit, while an extended beta-hairpin is found that lines the wall of the exit tunnel in the center of the 70S ribosome. The chain is Large ribosomal subunit protein uL22 from Moorella thermoacetica (strain ATCC 39073 / JCM 9320).